The chain runs to 338 residues: Probable tRNA pseudouridine synthase B (338 aa).

The active-site Nucleophile is Asp78. Residues 245–320 (LPKIILRDSA…IAASPIRVLM (76 aa)) enclose the PUA domain.

The protein belongs to the pseudouridine synthase TruB family. Type 2 subfamily.

The enzyme catalyses uridine(55) in tRNA = pseudouridine(55) in tRNA. In terms of biological role, could be responsible for synthesis of pseudouridine from uracil-55 in the psi GC loop of transfer RNAs. This is Probable tRNA pseudouridine synthase B from Methanosarcina mazei (strain ATCC BAA-159 / DSM 3647 / Goe1 / Go1 / JCM 11833 / OCM 88) (Methanosarcina frisia).